The primary structure comprises 46 residues: Large ribosomal subunit protein bL33B (46 aa).

Belongs to the bacterial ribosomal protein bL33 family.

This chain is Large ribosomal subunit protein bL33B (rpmG2), found in Mycoplasmopsis pulmonis (strain UAB CTIP) (Mycoplasma pulmonis).